A 168-amino-acid polypeptide reads, in one-letter code: Crossover junction endodeoxyribonuclease RuvC (168 aa).

Active-site residues include D8, E68, and D140. Mg(2+) contacts are provided by D8, E68, and D140.

The protein belongs to the RuvC family. As to quaternary structure, homodimer which binds Holliday junction (HJ) DNA. The HJ becomes 2-fold symmetrical on binding to RuvC with unstacked arms; it has a different conformation from HJ DNA in complex with RuvA. In the full resolvosome a probable DNA-RuvA(4)-RuvB(12)-RuvC(2) complex forms which resolves the HJ. The cofactor is Mg(2+).

The protein resides in the cytoplasm. The enzyme catalyses Endonucleolytic cleavage at a junction such as a reciprocal single-stranded crossover between two homologous DNA duplexes (Holliday junction).. Its function is as follows. The RuvA-RuvB-RuvC complex processes Holliday junction (HJ) DNA during genetic recombination and DNA repair. Endonuclease that resolves HJ intermediates. Cleaves cruciform DNA by making single-stranded nicks across the HJ at symmetrical positions within the homologous arms, yielding a 5'-phosphate and a 3'-hydroxyl group; requires a central core of homology in the junction. The consensus cleavage sequence is 5'-(A/T)TT(C/G)-3'. Cleavage occurs on the 3'-side of the TT dinucleotide at the point of strand exchange. HJ branch migration catalyzed by RuvA-RuvB allows RuvC to scan DNA until it finds its consensus sequence, where it cleaves and resolves the cruciform DNA. The sequence is that of Crossover junction endodeoxyribonuclease RuvC from Lawsonia intracellularis (strain PHE/MN1-00).